A 56-amino-acid polypeptide reads, in one-letter code: Large ribosomal subunit protein bL32c (56 aa).

Belongs to the bacterial ribosomal protein bL32 family.

Its subcellular location is the plastid. It localises to the chloroplast. This Platanus occidentalis (Sycamore) protein is Large ribosomal subunit protein bL32c.